The chain runs to 418 residues: Phosphatidylcholine:ceramide cholinephosphotransferase 1 (418 aa).

An SAM domain is found at 12-75; sequence WSPKKVADWL…LDMIETLKME (64 aa). Ser-13 is modified (phosphoserine). A run of 5 helical transmembrane segments spans residues 141 to 161, 189 to 209, 220 to 240, 281 to 301, and 309 to 329; these read FLAF…ISVV, FSIC…QWLL, FFCI…VTTL, MCGD…YLFI, and LWWY…CILL. His-290 is a catalytic residue. Residues His-333 and Asp-337 contribute to the active site. Residues 335–352 form a helical membrane-spanning segment; it reads TVDVVVAYYITTRLFWWY.

The protein belongs to the sphingomyelin synthase family. In terms of tissue distribution, widely expressed. Highest expression in the cardiovascular system.

Its subcellular location is the golgi apparatus membrane. It carries out the reaction an N-acylsphing-4-enine + a 1,2-diacyl-sn-glycero-3-phosphocholine = a sphingomyelin + a 1,2-diacyl-sn-glycerol. It catalyses the reaction 1-(9Z-octadecenoyl)-2-acyl-sn-3-glycerol + a sphingomyelin = a 1-(9Z-octadecenoyl)-2-acyl-sn-glycero-3-phosphocholine + an N-acylsphing-4-enine. The catalysed reaction is N-hexadecanoylsphinganine + a 1,2-diacyl-sn-glycero-3-phosphocholine = N-hexadecanoyl-sphinganine-1-phosphocholine + a 1,2-diacyl-sn-glycerol. The enzyme catalyses N-hexadecanoyl-(4R)-hydroxysphinganine + a 1,2-diacyl-sn-glycero-3-phosphocholine = N-hexadecanoyl-(4R)-hydroxysphinganine-phosphocholine + a 1,2-diacyl-sn-glycerol. It carries out the reaction an N-acylsphing-4-enine + a 1,2-diacyl-sn-glycero-3-phosphoethanolamine = an N-acylsphing-4-enine 1-phosphoethanolamine + a 1,2-diacyl-sn-glycerol. The protein operates within sphingolipid metabolism. Functionally, major sphingomyelin synthase at the Golgi apparatus. Catalyzes the reversible transfer of phosphocholine moiety in sphingomyelin biosynthesis: in the forward reaction transfers phosphocholine head group of phosphatidylcholine (PC) on to ceramide (CER) to form ceramide phosphocholine (sphingomyelin, SM) and diacylglycerol (DAG) as by-product, and in the reverse reaction transfers phosphocholine from SM to DAG to form PC and CER. The direction of the reaction depends on the levels of CER and DAG in Golgi membranes. Converts the newly synthesized CER, that is transported from the endoplasmic reticulum to the trans-Golgi by the Cer transport protein (CERT), to SM. Can form a heteromeric complex with glucosylceramide synthase (GCS) increasing SMS activity and reducing glucosylceramide synthesis, a critical mechanism that controls the metabolic fate of CER in the Golgi. Does not use free phosphorylcholine or CDP-choline as donor. Can also transfer phosphoethanolamine head group of phosphatidylethanolamine (PE) on to CER to form ceramide phosphoethanolamine (CPE). Regulates receptor-mediated signal transduction via mitogenic DAG and proapoptotic CER, as well as via SM, a structural component of membrane rafts that serve as platforms for signal transduction and protein sorting. Plays a role in secretory transport via regulation of DAG pool at the Golgi apparatus and its downstream effects on PRKD1. This Sus scrofa (Pig) protein is Phosphatidylcholine:ceramide cholinephosphotransferase 1 (SGMS1).